We begin with the raw amino-acid sequence, 119 residues long: Probable non-functional T cell receptor gamma variable 10 (119 aa).

An N-terminal signal peptide occupies residues 1 to 19; the sequence is MSLLEAFAFSSWALGLGLS. Positions 24–119 constitute an Ig-like domain; that stretch reads FQLSISTEVK…MAVYYCAAWD (96 aa). Cysteines 40 and 115 form a disulfide.

In terms of assembly, gamma-delta TR is a heterodimer composed of a gamma and delta chain; disulfide-linked. The gamma-delta TR is associated with the transmembrane signaling CD3 coreceptor proteins following the stoichiometry: a single gamma-delta TR heterodimer associates with one CD3D-CD3E heterodimer, one CD3G-CD3E heterodimer and one CD247 homodimer forming a stable octameric structure. Upon activation, gamma-delta TR complex associates with FCER1G to initiate intracellular signaling.

It localises to the cell membrane. Functionally, probable non-functional open reading frame (ORF) of V region of the variable domain of T cell receptor (TR) gamma chain. Non-functional ORF generally cannot participate in the synthesis of a productive T cell receptor (TR) chain due to altered V-(D)-J or switch recombination and/or splicing site (at mRNA level) and/or conserved amino acid change (protein level). Gamma-delta TRs recognize a variety of self and foreign non-peptide antigens frequently expressed at the epithelial boundaries between the host and external environment, including endogenous lipids presented by MH-like protein CD1D and phosphoantigens presented by butyrophilin-like molecule BTN3A1. Upon antigen recognition induces rapid, innate-like immune responses involved in pathogen clearance and tissue repair. Binding of gamma-delta TR complex to antigen triggers phosphorylation of immunoreceptor tyrosine-based activation motifs (ITAMs) in the CD3 chains by the LCK and FYN kinases, allowing the recruitment, phosphorylation, and activation of ZAP70 that facilitates phosphorylation of the scaffolding proteins LCP2 and LAT. This lead to the formation of a supramolecular signalosome that recruits the phospholipase PLCG1, resulting in calcium mobilization and ERK activation, ultimately leading to T cell expansion and differentiation into effector cells. Gamma-delta TRs are produced through somatic rearrangement of a limited repertoire of variable (V), diversity (D), and joining (J) genes. The potential diversity of gamma-delta TRs is conferred by the unique ability to rearrange (D) genes in tandem and to utilize all three reading frames. The combinatorial diversity is considerably increased by the sequence exonuclease trimming and random nucleotide (N) region additions which occur during the V-(D)-J rearrangements. This is Probable non-functional T cell receptor gamma variable 10 from Homo sapiens (Human).